The following is a 228-amino-acid chain: Phosphoribosylformylglycinamidine synthase subunit PurQ (228 aa).

One can recognise a Glutamine amidotransferase type-1 domain in the interval 2–225 (KAAVISFPGS…INQTEGADVR (224 aa)). The active-site Nucleophile is Cys-86. Active-site residues include His-194 and Glu-196.

Part of the FGAM synthase complex composed of 1 PurL, 1 PurQ and 2 PurS subunits.

The protein localises to the cytoplasm. The catalysed reaction is N(2)-formyl-N(1)-(5-phospho-beta-D-ribosyl)glycinamide + L-glutamine + ATP + H2O = 2-formamido-N(1)-(5-O-phospho-beta-D-ribosyl)acetamidine + L-glutamate + ADP + phosphate + H(+). It catalyses the reaction L-glutamine + H2O = L-glutamate + NH4(+). It functions in the pathway purine metabolism; IMP biosynthesis via de novo pathway; 5-amino-1-(5-phospho-D-ribosyl)imidazole from N(2)-formyl-N(1)-(5-phospho-D-ribosyl)glycinamide: step 1/2. Part of the phosphoribosylformylglycinamidine synthase complex involved in the purines biosynthetic pathway. Catalyzes the ATP-dependent conversion of formylglycinamide ribonucleotide (FGAR) and glutamine to yield formylglycinamidine ribonucleotide (FGAM) and glutamate. The FGAM synthase complex is composed of three subunits. PurQ produces an ammonia molecule by converting glutamine to glutamate. PurL transfers the ammonia molecule to FGAR to form FGAM in an ATP-dependent manner. PurS interacts with PurQ and PurL and is thought to assist in the transfer of the ammonia molecule from PurQ to PurL. This is Phosphoribosylformylglycinamidine synthase subunit PurQ from Lacticaseibacillus casei (strain BL23) (Lactobacillus casei).